The following is a 353-amino-acid chain: Chorismate synthase (353 aa).

Arg-48 lines the NADP(+) pocket. Residues Arg-128–Ser-130, Gly-280, Lys-295–Ser-299, and Arg-321 each bind FMN.

Belongs to the chorismate synthase family. In terms of assembly, homotetramer. It depends on FMNH2 as a cofactor.

It catalyses the reaction 5-O-(1-carboxyvinyl)-3-phosphoshikimate = chorismate + phosphate. It participates in metabolic intermediate biosynthesis; chorismate biosynthesis; chorismate from D-erythrose 4-phosphate and phosphoenolpyruvate: step 7/7. Catalyzes the anti-1,4-elimination of the C-3 phosphate and the C-6 proR hydrogen from 5-enolpyruvylshikimate-3-phosphate (EPSP) to yield chorismate, which is the branch point compound that serves as the starting substrate for the three terminal pathways of aromatic amino acid biosynthesis. This reaction introduces a second double bond into the aromatic ring system. The polypeptide is Chorismate synthase (Nitratidesulfovibrio vulgaris (strain DSM 19637 / Miyazaki F) (Desulfovibrio vulgaris)).